A 214-amino-acid polypeptide reads, in one-letter code: Acetoin utilization protein AcuB (214 aa).

CBS domains lie at 7–66 and 78–135; these read MKRD…ENKR and MKKD…GADQ.

As to quaternary structure, interacts with YabA.

It functions in the pathway ketone degradation; acetoin degradation. In terms of biological role, role in growth and sporulation on acetoin or butanediol. Involved in the breakdown of these compounds used as a carbon source. This is Acetoin utilization protein AcuB (acuB) from Bacillus subtilis (strain 168).